Consider the following 199-residue polypeptide: Holliday junction branch migration complex subunit RuvA (199 aa).

The interval 1–64 (MIAKLTGRLD…EDFLRLLGFA (64 aa)) is domain I. The segment at 65–143 (RAEERDWFRL…ALGGISGSGP (79 aa)) is domain II. Residues 144–146 (ALS) form a flexible linker region. Positions 147–199 (AAAGPVGDAIAALTGLGFKPGEASAAVAAANEELGADASLDALVRVALKKAAK) are domain III.

Belongs to the RuvA family. As to quaternary structure, homotetramer. Forms an RuvA(8)-RuvB(12)-Holliday junction (HJ) complex. HJ DNA is sandwiched between 2 RuvA tetramers; dsDNA enters through RuvA and exits via RuvB. An RuvB hexamer assembles on each DNA strand where it exits the tetramer. Each RuvB hexamer is contacted by two RuvA subunits (via domain III) on 2 adjacent RuvB subunits; this complex drives branch migration. In the full resolvosome a probable DNA-RuvA(4)-RuvB(12)-RuvC(2) complex forms which resolves the HJ.

The protein localises to the cytoplasm. The RuvA-RuvB-RuvC complex processes Holliday junction (HJ) DNA during genetic recombination and DNA repair, while the RuvA-RuvB complex plays an important role in the rescue of blocked DNA replication forks via replication fork reversal (RFR). RuvA specifically binds to HJ cruciform DNA, conferring on it an open structure. The RuvB hexamer acts as an ATP-dependent pump, pulling dsDNA into and through the RuvAB complex. HJ branch migration allows RuvC to scan DNA until it finds its consensus sequence, where it cleaves and resolves the cruciform DNA. This is Holliday junction branch migration complex subunit RuvA from Sphingopyxis alaskensis (strain DSM 13593 / LMG 18877 / RB2256) (Sphingomonas alaskensis).